The following is a 334-amino-acid chain: Protein POLAR-like 1 (334 aa).

Positions 53–63 (IRTSSEDDHHR) are enriched in basic and acidic residues. Positions 53–74 (IRTSSEDDHHRVGQFSDSPPPT) are disordered. A coiled-coil region spans residues 273–300 (ETRQQEEIKELEIALDDAKQRLHLKETE).

The protein resides in the cytoplasm. It localises to the cell cortex. In terms of biological role, acts as a stomatal lineage scaffold which regulates subcellular localization and transient polarization of kinases (e.g. ASK7/BIN2 and ASK3/SK12) involved in asymmetric cell division (ACD) in a BASL-dependent manner. This is Protein POLAR-like 1 from Arabidopsis thaliana (Mouse-ear cress).